Consider the following 127-residue polypeptide: UPF0102 protein Geob_1494 (127 aa).

It belongs to the UPF0102 family.

In Geotalea daltonii (strain DSM 22248 / JCM 15807 / FRC-32) (Geobacter daltonii), this protein is UPF0102 protein Geob_1494.